The sequence spans 454 residues: tRNA(Ile)-lysidine synthase (454 aa).

27–32 (SGGSDS) provides a ligand contact to ATP.

It belongs to the tRNA(Ile)-lysidine synthase family.

The protein localises to the cytoplasm. It catalyses the reaction cytidine(34) in tRNA(Ile2) + L-lysine + ATP = lysidine(34) in tRNA(Ile2) + AMP + diphosphate + H(+). Ligates lysine onto the cytidine present at position 34 of the AUA codon-specific tRNA(Ile) that contains the anticodon CAU, in an ATP-dependent manner. Cytidine is converted to lysidine, thus changing the amino acid specificity of the tRNA from methionine to isoleucine. The polypeptide is tRNA(Ile)-lysidine synthase (Mesorhizobium japonicum (strain LMG 29417 / CECT 9101 / MAFF 303099) (Mesorhizobium loti (strain MAFF 303099))).